Here is a 358-residue protein sequence, read N- to C-terminus: Photosystem II protein D1 3 (358 aa).

Helical transmembrane passes span 28–45, 117–132, and 141–155; these read YIGW…AATT, HFLI…QWEL, and WICV…AAMA. Residue His-117 participates in chlorophyll a binding. Residue Tyr-125 coordinates pheophytin a. [CaMn4O5] cluster-binding residues include Asp-169 and Glu-188. A helical membrane pass occupies residues 196–217; sequence FHMLGVAGVFGGSLFSAMHGSL. His-197 serves as a coordination point for chlorophyll a. Residues His-214 and 263–264 each bind a quinone; that span reads SF. His-214 serves as a coordination point for Fe cation. His-271 serves as a coordination point for Fe cation. A helical transmembrane segment spans residues 273 to 287; it reads LLGAWPVVGIWFTSM. The [CaMn4O5] cluster site is built by His-331, Glu-332, Asp-341, and Ala-343. The propeptide occupies 344-358; the sequence is TVESTPVALQAPAIG.

It belongs to the reaction center PufL/M/PsbA/D family. In terms of assembly, PSII is composed of 1 copy each of membrane proteins PsbA, PsbB, PsbC, PsbD, PsbE, PsbF, PsbH, PsbI, PsbJ, PsbK, PsbL, PsbM, PsbT, PsbX, PsbY, PsbZ, Psb30/Ycf12, peripheral proteins PsbO, CyanoQ (PsbQ), PsbU, PsbV and a large number of cofactors. It forms dimeric complexes. The D1/D2 heterodimer binds P680, chlorophylls that are the primary electron donor of PSII, and subsequent electron acceptors. It shares a non-heme iron and each subunit binds pheophytin, quinone, additional chlorophylls, carotenoids and lipids. D1 provides most of the ligands for the Mn4-Ca-O5 cluster of the oxygen-evolving complex (OEC). There is also a Cl(-1) ion associated with D1 and D2, which is required for oxygen evolution. The PSII complex binds additional chlorophylls, carotenoids and specific lipids. is required as a cofactor. In terms of processing, tyr-160 forms a radical intermediate that is referred to as redox-active TyrZ, YZ or Y-Z. C-terminally processed by CtpA; processing is essential to allow assembly of the oxygen-evolving complex and thus photosynthetic growth.

The protein resides in the cellular thylakoid membrane. The enzyme catalyses 2 a plastoquinone + 4 hnu + 2 H2O = 2 a plastoquinol + O2. Functionally, photosystem II (PSII) is a light-driven water:plastoquinone oxidoreductase that uses light energy to abstract electrons from H(2)O, generating O(2) and a proton gradient subsequently used for ATP formation. It consists of a core antenna complex that captures photons, and an electron transfer chain that converts photonic excitation into a charge separation. The D1/D2 (PsbA/PsbD) reaction center heterodimer binds P680, the primary electron donor of PSII as well as several subsequent electron acceptors. This Synechococcus sp. (strain CC9311) protein is Photosystem II protein D1 3.